A 130-amino-acid polypeptide reads, in one-letter code: General stress protein 13 (130 aa).

The S1 motif domain maps to 8 to 77; the sequence is GSVYTGKVTG…EKGKISLSIR (70 aa). The tract at residues 76-109 is disordered; the sequence is IRATQAAPEKKESKPRKPKAAQVSEEASTPQGFN. A compositionally biased stretch (polar residues) spans 100–109; sequence EEASTPQGFN.

In terms of assembly, found in association with the 30S subunit of the ribosome.

Its subcellular location is the cytoplasm. The sequence is that of General stress protein 13 (yugI) from Bacillus subtilis (strain 168).